The sequence spans 147 residues: Large ribosomal subunit protein uL11 (147 aa).

This sequence belongs to the universal ribosomal protein uL11 family. In terms of assembly, part of the ribosomal stalk of the 50S ribosomal subunit. Interacts with L10 and the large rRNA to form the base of the stalk. L10 forms an elongated spine to which L12 dimers bind in a sequential fashion forming a multimeric L10(L12)X complex. One or more lysine residues are methylated.

In terms of biological role, forms part of the ribosomal stalk which helps the ribosome interact with GTP-bound translation factors. The chain is Large ribosomal subunit protein uL11 from Phocaeicola vulgatus (strain ATCC 8482 / DSM 1447 / JCM 5826 / CCUG 4940 / NBRC 14291 / NCTC 11154) (Bacteroides vulgatus).